Reading from the N-terminus, the 434-residue chain is Glutamyl-tRNA reductase (434 aa).

Substrate is bound by residues 49 to 52, Ser109, 114 to 116, and Gln120; these read TCNR and EPQ. The active-site Nucleophile is the Cys50. 189–194 contributes to the NADP(+) binding site; it reads GAGEMC.

Belongs to the glutamyl-tRNA reductase family. Homodimer.

The enzyme catalyses (S)-4-amino-5-oxopentanoate + tRNA(Glu) + NADP(+) = L-glutamyl-tRNA(Glu) + NADPH + H(+). It functions in the pathway porphyrin-containing compound metabolism; protoporphyrin-IX biosynthesis; 5-aminolevulinate from L-glutamyl-tRNA(Glu): step 1/2. In terms of biological role, catalyzes the NADPH-dependent reduction of glutamyl-tRNA(Glu) to glutamate 1-semialdehyde (GSA). The sequence is that of Glutamyl-tRNA reductase from Geobacter sulfurreducens (strain ATCC 51573 / DSM 12127 / PCA).